The chain runs to 179 residues: Interleukin-10 (179 aa).

An N-terminal signal peptide occupies residues 1-19; it reads MPSSSALLCCLVFLAGVAA. 2 cysteine pairs are disulfide-bonded: C31–C127 and C81–C133. N135 carries an N-linked (GlcNAc...) asparagine glycan.

Belongs to the IL-10 family. In terms of assembly, homodimer. Interacts with IL10RA and IL10RB.

It is found in the secreted. Major immune regulatory cytokine that acts on many cells of the immune system where it has profound anti-inflammatory functions, limiting excessive tissue disruption caused by inflammation. Mechanistically, IL10 binds to its heterotetrameric receptor comprising IL10RA and IL10RB leading to JAK1 and STAT2-mediated phosphorylation of STAT3. In turn, STAT3 translocates to the nucleus where it drives expression of anti-inflammatory mediators. Targets antigen-presenting cells (APCs) such as macrophages and monocytes and inhibits their release of pro-inflammatory cytokines including granulocyte-macrophage colony-stimulating factor /GM-CSF, granulocyte colony-stimulating factor/G-CSF, IL-1 alpha, IL-1 beta, IL-6, IL-8 and TNF-alpha. Also interferes with antigen presentation by reducing the expression of MHC-class II and co-stimulatory molecules, thereby inhibiting their ability to induce T cell activation. In addition, controls the inflammatory response of macrophages by reprogramming essential metabolic pathways including mTOR signaling. This chain is Interleukin-10 (IL10), found in Bubalus carabanensis (Swamp type water buffalo).